A 207-amino-acid polypeptide reads, in one-letter code: Protein lin-7 homolog B (207 aa).

Positions Met-1–Asp-13 match the Kinase interacting site motif. Residues Leu-10 to Gly-65 form the L27 domain. The region spanning Val-93 to Pro-175 is the PDZ domain. The disordered stretch occupies residues Lys-187–Gly-207. Over residues His-197–Gly-207 the composition is skewed to polar residues.

Belongs to the lin-7 family. Forms a complex with CASK and CASKIN1. Component of the brain-specific heterotrimeric complex (LIN-10-LIN-2-LIN-7 complex) composed of at least APBA1, CASK, and LIN7, which associates with the motor protein KIF17 to transport vesicles along microtubules. Forms a heterotrimeric complex composed of MMP5, LIN7B and PATJ; the N-terminal L27 domain of PALS1 interacts with the L27 domain of PATJ and the C-terminal L27 domain of PALS1 interacts with the L27 domain of LIN7B. Forms a heterotrimeric complex with DLG1 and CASK via their L27 domains. Interacts with DLG4 and GRIN2B as well as CDH1 and CTNNB1, the channels KCNJ12/Kir2.2, KCNJ4/Kir2.3 and probably KCNJ2/Kir2.1 and SLC6A12/BGT-1 via its PDZ domain. The association of LIN7A with cadherin and beta-catenin is calcium-dependent, occurs at synaptic junctions and requires the actin cytoskeleton. Interacts with EGFR, ERBB2, ERBB3 and ERBB4 with both PDZ and KID domains. Associates with KIF17 via APBA1. Interacts with ASIC3. Interacts with TOPK. Interacts with RTKN. Interacts with APBA1. Interacts with MPP7. Interacts with DLG2. Interacts with DLG3.

The protein localises to the cell membrane. The protein resides in the basolateral cell membrane. It localises to the cell junction. It is found in the postsynaptic density membrane. Its subcellular location is the tight junction. Functionally, plays a role in establishing and maintaining the asymmetric distribution of channels and receptors at the plasma membrane of polarized cells. Forms membrane-associated multiprotein complexes that may regulate delivery and recycling of proteins to the correct membrane domains. The tripartite complex composed of LIN7 (LIN7A, LIN7B or LIN7C), CASK and APBA1 associates with the motor protein KIF17 to transport vesicles containing N-methyl-D-aspartate (NMDA) receptor subunit NR2B along microtubules. This complex may have the potential to couple synaptic vesicle exocytosis to cell adhesion in brain. Ensures the proper localization of GRIN2B (subunit 2B of the NMDA receptor) to neuronal postsynaptic density and may function in localizing synaptic vesicles at synapses where it is recruited by beta-catenin and cadherin. Required to localize Kir2 channels, GABA transporter (SLC6A12) and EGFR/ERBB1, ERBB2, ERBB3 and ERBB4 to the basolateral membrane of epithelial cells. May increase the amplitude of ASIC3 acid-evoked currents by stabilizing the channel at the cell surface. The protein is Protein lin-7 homolog B (LIN7B) of Homo sapiens (Human).